A 358-amino-acid polypeptide reads, in one-letter code: Biotin synthase (358 aa).

The Radical SAM core domain occupies Asn44 to Arg272. Residues Cys59, Cys63, and Cys66 each coordinate [4Fe-4S] cluster. [2Fe-2S] cluster-binding residues include Cys103, Cys136, Cys196, and Arg267.

This sequence belongs to the radical SAM superfamily. Biotin synthase family. Homodimer. [4Fe-4S] cluster serves as cofactor. Requires [2Fe-2S] cluster as cofactor.

The enzyme catalyses (4R,5S)-dethiobiotin + (sulfur carrier)-SH + 2 reduced [2Fe-2S]-[ferredoxin] + 2 S-adenosyl-L-methionine = (sulfur carrier)-H + biotin + 2 5'-deoxyadenosine + 2 L-methionine + 2 oxidized [2Fe-2S]-[ferredoxin]. It participates in cofactor biosynthesis; biotin biosynthesis; biotin from 7,8-diaminononanoate: step 2/2. Functionally, catalyzes the conversion of dethiobiotin (DTB) to biotin by the insertion of a sulfur atom into dethiobiotin via a radical-based mechanism. The polypeptide is Biotin synthase (Cutibacterium acnes (strain DSM 16379 / KPA171202) (Propionibacterium acnes)).